The following is a 655-amino-acid chain: RalA-binding protein 1 (655 aa).

The tract at residues 1-158 (MTECFLPPTS…KKSKDLTAAD (158 aa)) is disordered. Position 2 is an N-acetylthreonine (Thr-2). Positions 24-33 (LTRTPSSEEI) are enriched in polar residues. Phosphoserine is present on residues Ser-29, Ser-30, and Ser-34. At Thr-44 the chain carries Phosphothreonine. Ser-48 and Ser-62 each carry phosphoserine. Over residues 52–68 (DILHEPPDVVSDDEKDH) the composition is skewed to basic and acidic residues. 69–74 (GKKKGK) contributes to the ATP binding site. Residues 69–79 (GKKKGKFKKKE) show a composition bias toward basic residues. A phosphoserine mark is found at Ser-92 and Ser-93. A compositionally biased stretch (basic residues) spans 102-118 (KMKRSKGIHVFKKPSFS). The interval 102–119 (KMKRSKGIHVFKKPSFSK) is nuclear localization signal. The segment covering 119-155 (KKKEKDFKIKEKPKEEKHKEEKHKEEKHKEKKSKDLT) has biased composition (basic and acidic residues). The interval 154 to 219 (LTAADVVKQW…PAVFRECIDY (66 aa)) is mediates association with membranes and could form transmembrane domains. The Rho-GAP domain maps to 192–380 (IPLADAVERT…VVLKQVMKPL (189 aa)). Positions 403–499 (RRQEFLLNCL…LTEQEELLAM (97 aa)) are mediates interaction with RALA and RALB. 418-425 (GGIKDLSK) provides a ligand contact to ATP. Residues Ser-461 and Ser-463 each carry the phosphoserine modification. The interval 500–655 (EQFLRRQIAS…PSRDRKETSI (156 aa)) is mediates interaction with REPS1 and REPS2. Disordered regions lie at residues 525 to 551 (QSRQ…DEEE) and 601 to 655 (AEQQ…ETSI). Residues 536–551 (EEYSSESESESEDEEE) are compositionally biased toward acidic residues. Residues 624-655 (GVLEPKAAKEQPKAGKEPAKPSPSRDRKETSI) are compositionally biased toward basic and acidic residues. Ser-645 is subject to Phosphoserine.

Interacts with the GTP-bound form of RALA (via effector domain); during mitosis, recruits RALBP1 to the mitochondrion where it promotes DNM1L phosphorylation and mitochondrial fission. Interacts with DNM1L; mediates its mitotic kinase cyclin B-CDK1-mediated phosphorylation during mitosis to promote mitochondrial fission. Interacts with the mitotic kinase cyclin B-CDK1 during mitosis. Interacts with the GTP-bound form of RALB (via effector domain). Interacts with REPS1; the interaction is direct and does not affect RALA-binding nor GTPase activator activity of RALBP1. Interacts with REPS2; the interaction is direct and does not affect RALA-binding nor GTPase activator activity of RALBP1. Interacts with EPN1, NUMB and TFAP2A during interphase and mitosis. Interacts with AP2M1; as part of the AP2 complex. Interacts with CDC42. Interacts with RAC1. Post-translationally, tyrosine-phosphorylated upon stimulation of cells with EGF. May undergo proteolytic cleavage to give peptides which reassemble to form a transporter complex. As to expression, expressed ubiquitously but at low levels. Shows a strong expression in the erythrocytes.

The protein resides in the cell membrane. It is found in the cytoplasm. The protein localises to the cytosol. Its subcellular location is the cytoskeleton. It localises to the spindle pole. The protein resides in the nucleus. It is found in the mitochondrion. It carries out the reaction an S-substituted glutathione(in) + ATP + H2O = an S-substituted glutathione(out) + ADP + phosphate + H(+). The catalysed reaction is ATP + H2O + xenobioticSide 1 = ADP + phosphate + xenobioticSide 2.. It catalyses the reaction leukotriene C4(in) + ATP + H2O = leukotriene C4(out) + ADP + phosphate + H(+). In terms of biological role, multifunctional protein that functions as a downstream effector of RALA and RALB. As a GTPase-activating protein/GAP can inactivate CDC42 and RAC1 by stimulating their GTPase activity. As part of the Ral signaling pathway, may also regulate ligand-dependent EGF and insulin receptors-mediated endocytosis. During mitosis, may act as a scaffold protein in the phosphorylation of EPSIN/EPN1 by the mitotic kinase cyclin B-CDK1, preventing endocytosis during that phase of the cell cycle. During mitosis, also controls mitochondrial fission as an effector of RALA. Recruited to mitochondrion by RALA, acts as a scaffold to foster the mitotic kinase cyclin B-CDK1-mediated phosphorylation and activation of DNM1L. Functionally, could also function as a primary ATP-dependent active transporter for glutathione conjugates of electrophiles. May also actively catalyze the efflux of a wide range of substrates including xenobiotics like doxorubicin (DOX) contributing to cell multidrug resistance. In Homo sapiens (Human), this protein is RalA-binding protein 1.